A 385-amino-acid chain; its full sequence is MEWNGLKMIISTMEPQVSNGPTSNTSNGPSSNNRNCPSPMQTGATTDDSKTNLIVNYLPQNMTQEEFRSLFGSIGEIESCKLVRDKITGQSLGYGFVNYIDPKDAEKAINTLNGLRLQTKTIKVSYARPSSASIRDANLYVSGLPKTMTQKELEQLFSQYGRIITSRILVDQVTGVSRGVGFIRFDKRIEAEEAIKGLNGQKPSGATEPITVKFANNPSQKSSQALLSQLYQSPNRRYPGPLHHQAQRFRLDNLLNMAYGVKRLMSGPVPPSACPPRFSPITIDGMTSLVGMNIPGHTGTGWCIFVYNLSPDSDESVLWQLFGPFGAVNNVKVIRDFNTNKCKGFGFVTMTNYDEAAMAIASLNGYRLGDRVLQVSFKTNKAHKS.

The segment at 12 to 48 (TMEPQVSNGPTSNTSNGPSSNNRNCPSPMQTGATTDD) is disordered. Over residues 18 to 33 (SNGPTSNTSNGPSSNN) the composition is skewed to low complexity. Polar residues predominate over residues 34-48 (RNCPSPMQTGATTDD). Phosphoserine is present on S38. 2 RRM domains span residues 51 to 129 (TNLI…YARP) and 137 to 217 (ANLY…FANN). S233 bears the Phosphoserine mark. R248 is modified (asymmetric dimethylarginine; by CARM1; alternate). The residue at position 248 (R248) is an Omega-N-methylarginine; by CARM1; alternate. Residues 302-380 (WCIFVYNLSP…RVLQVSFKTN (79 aa)) form the RRM 3 domain.

It belongs to the RRM elav family. As to quaternary structure, component of a TAU mRNP complex, at least composed of IGF2BP1, ELAVL4 and G3BP. Associates with the EIF4F cap-binding complex, composed of EIF4G, EIF4A, EIF4E and PABP. Within the EIF4F cap-binding complex, interacts with EIF4A. Interacts with SMN (via Tudor domain) in an RNA-independent manner; the interaction is required for localization of ELAVL4 to RNA granules. Interacts with MAP1 light chain LC1 (via C-terminus); the interaction contributes to the association of ELAVL4 with microtubules. Interacts with MAP1 light chain LC2. In terms of processing, methylated by CARM1, which leads to reduced RNA-binding activity and enhanced interaction with SMN. Methylation at Arg-248 by CARM1 weakens protective binding to the 3'UTR of CDKN1A mRNA and down-regulates CDKN1A protein expression, thereby maintaining cells in a proliferative state. Methylation is inhibited by NGF, which facilitates neurite outgrowth. As to expression, expressed in pancreatic beta cells (at protein level). Expressed in the brain.

The protein resides in the cytoplasm. It localises to the perikaryon. The protein localises to the cell projection. It is found in the dendrite. Its subcellular location is the axon. The protein resides in the growth cone. Its function is as follows. RNA-binding protein that is involved in the post-transcriptional regulation of mRNAs. Plays a role in the regulation of mRNA stability, alternative splicing and translation. Binds to AU-rich element (ARE) sequences in the 3' untranslated region (UTR) of target mRNAs, including GAP43, VEGF, FOS, CDKN1A and ACHE mRNA. Many of the target mRNAs are coding for RNA-binding proteins, transcription factors and proteins involved in RNA processing and/or neuronal development and function. By binding to the mRNA 3'UTR, decreases mRNA deadenylation and thereby contributes to the stabilization of mRNA molecules and their protection from decay. Also binds to the polyadenylated (poly(A)) tail in the 3'UTR of mRNA, thereby increasing its affinity for mRNA binding. Mainly plays a role in neuron-specific RNA processing by stabilization of mRNAs such as GAP43, ACHE and mRNAs of other neuronal proteins, thereby contributing to the differentiation of neural progenitor cells, nervous system development, learning and memory mechanisms. Involved in the negative regulation of the proliferative activity of neuronal stem cells and in the positive regulation of neuronal differentiation of neural progenitor cells. Promotes neuronal differentiation of neural stem/progenitor cells in the adult subventricular zone of the hippocampus by binding to and stabilizing SATB1 mRNA. Binds and stabilizes MSI1 mRNA in neural stem cells. Exhibits increased binding to ACHE mRNA during neuronal differentiation, thereby stabilizing ACHE mRNA and enhancing its expression. Protects CDKN1A mRNA from decay by binding to its 3'-UTR. May bind to APP and BACE1 mRNAS and the BACE1AS lncRNA and enhance their stabilization. Plays a role in neurite outgrowth and in the establishment and maturation of dendritic arbors, thereby contributing to neocortical and hippocampal circuitry function. Stabilizes GAP43 mRNA and protects it from decay during postembryonic development in the brain. By promoting the stabilization of GAP43 mRNA, plays a role in NGF-mediated neurite outgrowth. Binds to BDNF long 3'UTR mRNA, thereby leading to its stabilization and increased dendritic translation after activation of PKC. By increasing translation of BDNF after nerve injury, may contribute to nerve regeneration. Acts as a stabilizing factor by binding to the 3'UTR of NOVA1 mRNA, thereby increasing its translation and enhancing its functional activity in neuron-specific splicing. Stimulates translation of mRNA in a poly(A)- and cap-dependent manner, possibly by associating with the EIF4F cap-binding complex. May also negatively regulate translation by binding to the 5'UTR of Ins2 mRNA, thereby repressing its translation. Upon glucose stimulation, Ins2 mRNA is released from ELAVL4 and translational inhibition is abolished. Also plays a role in the regulation of alternative splicing. May regulate alternative splicing of CALCA pre-mRNA into Calcitonin and Calcitonin gene-related peptide 1 (CGRP) by competing with splicing regulator TIAR for binding to U-rich intronic sequences of CALCA pre-mRNA. The protein is ELAV-like protein 4 (ELAVL4) of Homo sapiens (Human).